We begin with the raw amino-acid sequence, 378 residues long: UPF0754 membrane protein BT9727_0767 (378 aa).

The next 2 membrane-spanning stretches (helical) occupy residues methionine 1 to threonine 21 and tyrosine 357 to leucine 377.

This sequence belongs to the UPF0754 family.

Its subcellular location is the cell membrane. The sequence is that of UPF0754 membrane protein BT9727_0767 from Bacillus thuringiensis subsp. konkukian (strain 97-27).